The following is a 1002-amino-acid chain: Calcium-transporting ATPase sarcoplasmic/endoplasmic reticulum type (1002 aa).

The Cytoplasmic segment spans residues 1–48 (MEDGHSKTVEQSLNFFGTDGERGLTLDQIKTNQAKYGPNELPTEEGKS). A helical transmembrane segment spans residues 49-69 (IWQLVLEQFDDLLVKILLLAA). The Lumenal portion of the chain corresponds to 70–89 (IISFVLALFEEHEETFTAFV). A helical transmembrane segment spans residues 90–110 (EPLVILLILIANAVVGVWQER). Over 111–253 (NAESAIEALK…EIKTPLQQKL (143 aa)) the chain is Cytoplasmic. A helical transmembrane segment spans residues 254–273 (DEFGEQLSKVISVICVAVWA). Topologically, residues 274–295 (INIGHFNDPAHGGSWIKGAIYY) are lumenal. A helical membrane pass occupies residues 296-313 (FKIAVALAVAAIPEGLPA). Positions 304, 305, 307, and 309 each coordinate Ca(2+). Residues 314-757 (VITTCLALGT…EEGRAIYNNM (444 aa)) are Cytoplasmic-facing. Asp351 serves as the catalytic 4-aspartylphosphate intermediate. The Mg(2+) site is built by Asp703 and Asp707. A helical transmembrane segment spans residues 758–777 (KQFIRYLISSNIGEVVSIFL). 2 residues coordinate Ca(2+): Asn768 and Glu771. At 778-787 (TAALGLPEAL) the chain is on the lumenal side. The chain crosses the membrane as a helical span at residues 788-808 (IPVQLLWVNLVTDGLPATALG). Ca(2+)-binding residues include Asn796, Thr799, and Asp800. Over 809–828 (FNPPDLDIMDKPPRKADEGL) the chain is Cytoplasmic. A helical transmembrane segment spans residues 829 to 851 (ISGWLFFRYMAIGFYVGAATVGA). The Lumenal segment spans residues 852 to 897 (AAWWFIASSEGPGLTYWQLTHHLSCLGGGDEFKGVDCKIFSDPKAM). A helical membrane pass occupies residues 898–917 (TMALSVLVTIEMLNAMNSLS). Glu908 serves as a coordination point for Ca(2+). Residues 918 to 930 (ENQSLISMPPWCN) lie on the Cytoplasmic side of the membrane. A helical transmembrane segment spans residues 931 to 949 (LWLIGSMALSFTLHFVILY). Residues 950-964 (VDVLSTVFQVTPLSA) lie on the Lumenal side of the membrane. A helical transmembrane segment spans residues 965–985 (EEWITVMKFSIPVVLLDETLK). At 986–1002 (FVARKIADVPDAVVDKW) the chain is on the cytoplasmic side.

Belongs to the cation transport ATPase (P-type) (TC 3.A.3) family.

It localises to the endoplasmic reticulum membrane. Its subcellular location is the sarcoplasmic reticulum membrane. The enzyme catalyses Ca(2+)(in) + ATP + H2O = Ca(2+)(out) + ADP + phosphate + H(+). Functionally, this magnesium-dependent enzyme catalyzes the hydrolysis of ATP coupled with the transport of calcium. This Drosophila pseudoobscura pseudoobscura (Fruit fly) protein is Calcium-transporting ATPase sarcoplasmic/endoplasmic reticulum type.